Reading from the N-terminus, the 43-residue chain is Potassium channel toxin gamma-KTx 4.13 (43 aa).

Disulfide bonds link Cys5/Cys23, Cys11/Cys34, Cys20/Cys39, and Cys24/Cys41.

Belongs to the ergtoxin family. Gamma-KTx 4 subfamily. In terms of tissue distribution, expressed by the venom gland.

The protein resides in the secreted. Its function is as follows. Reversibly blocks Kv11/ERG potassium channels. The protein is Potassium channel toxin gamma-KTx 4.13 of Centruroides noxius (Mexican scorpion).